Here is a 453-residue protein sequence, read N- to C-terminus: Bifunctional protein GlmU (453 aa).

The interval 1-231 is pyrophosphorylase; the sequence is MERSSLAVIL…EKELTGCNNR (231 aa). Residues 10-13, K24, Q77, 82-83, 105-107, G143, E157, N172, and N229 contribute to the UDP-N-acetyl-alpha-D-glucosamine site; these read LAAG, GT, and YGD. D107 lines the Mg(2+) pocket. Residue N229 participates in Mg(2+) binding. Residues 232–252 form a linker region; it reads AELAFIERLWQERRRHELMVD. The interval 253 to 453 is N-acetyltransferase; sequence GVSMIAPETV…AQKEAKKKSS (201 aa). UDP-N-acetyl-alpha-D-glucosamine contacts are provided by R318 and K336. The Proton acceptor role is filled by H348. UDP-N-acetyl-alpha-D-glucosamine contacts are provided by Y351 and N362. Acetyl-CoA-binding positions include A365, 371–372, S390, S408, and R425; that span reads NY.

In the N-terminal section; belongs to the N-acetylglucosamine-1-phosphate uridyltransferase family. It in the C-terminal section; belongs to the transferase hexapeptide repeat family. In terms of assembly, homotrimer. Requires Mg(2+) as cofactor.

Its subcellular location is the cytoplasm. It carries out the reaction alpha-D-glucosamine 1-phosphate + acetyl-CoA = N-acetyl-alpha-D-glucosamine 1-phosphate + CoA + H(+). The catalysed reaction is N-acetyl-alpha-D-glucosamine 1-phosphate + UTP + H(+) = UDP-N-acetyl-alpha-D-glucosamine + diphosphate. It participates in nucleotide-sugar biosynthesis; UDP-N-acetyl-alpha-D-glucosamine biosynthesis; N-acetyl-alpha-D-glucosamine 1-phosphate from alpha-D-glucosamine 6-phosphate (route II): step 2/2. It functions in the pathway nucleotide-sugar biosynthesis; UDP-N-acetyl-alpha-D-glucosamine biosynthesis; UDP-N-acetyl-alpha-D-glucosamine from N-acetyl-alpha-D-glucosamine 1-phosphate: step 1/1. Its pathway is bacterial outer membrane biogenesis; LPS lipid A biosynthesis. Its function is as follows. Catalyzes the last two sequential reactions in the de novo biosynthetic pathway for UDP-N-acetylglucosamine (UDP-GlcNAc). The C-terminal domain catalyzes the transfer of acetyl group from acetyl coenzyme A to glucosamine-1-phosphate (GlcN-1-P) to produce N-acetylglucosamine-1-phosphate (GlcNAc-1-P), which is converted into UDP-GlcNAc by the transfer of uridine 5-monophosphate (from uridine 5-triphosphate), a reaction catalyzed by the N-terminal domain. In Agrobacterium fabrum (strain C58 / ATCC 33970) (Agrobacterium tumefaciens (strain C58)), this protein is Bifunctional protein GlmU.